The sequence spans 202 residues: Imidazole glycerol phosphate synthase subunit HisH 2 (202 aa).

In terms of domain architecture, Glutamine amidotransferase type-1 spans 1-202 (MIAIIDYGMG…KLMENFIKQA (202 aa)). The active-site Nucleophile is Cys80. Catalysis depends on residues His183 and Glu185.

Heterodimer of HisH and HisF.

It is found in the cytoplasm. It catalyses the reaction 5-[(5-phospho-1-deoxy-D-ribulos-1-ylimino)methylamino]-1-(5-phospho-beta-D-ribosyl)imidazole-4-carboxamide + L-glutamine = D-erythro-1-(imidazol-4-yl)glycerol 3-phosphate + 5-amino-1-(5-phospho-beta-D-ribosyl)imidazole-4-carboxamide + L-glutamate + H(+). It carries out the reaction L-glutamine + H2O = L-glutamate + NH4(+). Its pathway is amino-acid biosynthesis; L-histidine biosynthesis; L-histidine from 5-phospho-alpha-D-ribose 1-diphosphate: step 5/9. Functionally, IGPS catalyzes the conversion of PRFAR and glutamine to IGP, AICAR and glutamate. The HisH subunit provides the glutamine amidotransferase activity that produces the ammonia necessary to HisF for the synthesis of IGP and AICAR. The polypeptide is Imidazole glycerol phosphate synthase subunit HisH 2 (hisH2) (Methanococcus maripaludis (strain DSM 14266 / JCM 13030 / NBRC 101832 / S2 / LL)).